Reading from the N-terminus, the 540-residue chain is 2-isopropylmalate synthase (540 aa).

The 264-residue stretch at 8–271 (VLIFDTTLRD…NPFFGREEDS (264 aa)) folds into the Pyruvate carboxyltransferase domain. Mn(2+) contacts are provided by aspartate 17, histidine 208, histidine 210, and asparagine 244. The tract at residues 408 to 540 (QLKLVQVSCG…PVVLESRPTL (133 aa)) is regulatory domain.

Belongs to the alpha-IPM synthase/homocitrate synthase family. LeuA type 1 subfamily. As to quaternary structure, homodimer. The cofactor is Mn(2+).

It localises to the cytoplasm. The catalysed reaction is 3-methyl-2-oxobutanoate + acetyl-CoA + H2O = (2S)-2-isopropylmalate + CoA + H(+). Its pathway is amino-acid biosynthesis; L-leucine biosynthesis; L-leucine from 3-methyl-2-oxobutanoate: step 1/4. Its function is as follows. Catalyzes the condensation of the acetyl group of acetyl-CoA with 3-methyl-2-oxobutanoate (2-ketoisovalerate) to form 3-carboxy-3-hydroxy-4-methylpentanoate (2-isopropylmalate). This Synechococcus sp. (strain CC9605) protein is 2-isopropylmalate synthase.